The sequence spans 760 residues: Catalase-peroxidase (760 aa).

A signal peptide spans 1-45 (MKGTPFRSPHLYQEGSSCMHRTIRSVAAVLTVVLSATIPMVPAWS). Positions 124–245 (WHGAGTYRTY…LAATQMGLIY (122 aa)) form a cross-link, tryptophyl-tyrosyl-methioninium (Trp-Tyr) (with M-271). The Proton acceptor role is filled by H125. The tryptophyl-tyrosyl-methioninium (Tyr-Met) (with W-124) cross-link spans 245–271 (YVNPEGPNGVPDPVAAARDIREAFGGM). Position 286 (H286) interacts with heme b.

This sequence belongs to the peroxidase family. Peroxidase/catalase subfamily. In terms of assembly, homodimer or homotetramer. It depends on heme b as a cofactor. In terms of processing, formation of the three residue Trp-Tyr-Met cross-link is important for the catalase, but not the peroxidase activity of the enzyme.

It carries out the reaction H2O2 + AH2 = A + 2 H2O. It catalyses the reaction 2 H2O2 = O2 + 2 H2O. Bifunctional enzyme with both catalase and broad-spectrum peroxidase activity. The protein is Catalase-peroxidase of Granulibacter bethesdensis (strain ATCC BAA-1260 / CGDNIH1).